The chain runs to 272 residues: MMACHC-like protein (272 aa).

Residues Asp-121, 132–135, and 146–148 each bind substrate; these read ILMQ and YYQ.

The protein belongs to the MMACHC family. Requires FAD as cofactor. It depends on FMN as a cofactor.

The protein resides in the cytoplasm. Catalyzes the reductive dealkylation of cyanocobalamin to cob(II)alamin, using FAD or FMN as cofactor and NADPH as cosubstrate. Can also catalyze the glutathione-dependent reductive demethylation of methylcobalamin, and, with much lower efficiency, the glutathione-dependent reductive demethylation of adenosylcobalamin. Under anaerobic conditions cob(I)alamin is the first product; it is highly reactive and is converted to aquocob(II)alamin in the presence of oxygen. Binds cyanocobalamin, adenosylcobalamin, methylcobalamin and other, related vitamin B12 derivatives. This Caenorhabditis elegans protein is MMACHC-like protein (cblc-1).